Reading from the N-terminus, the 172-residue chain is NAD(P)H-quinone oxidoreductase subunit I, chloroplastic (172 aa).

4Fe-4S ferredoxin-type domains are found at residues 55 to 84 (GRIHFEFDKCIACEVCVRVCPIDLPVVDWK) and 95 to 124 (LNYSIDFGICIFCGNCVEYCPTNCLSMTEE). [4Fe-4S] cluster-binding residues include cysteine 64, cysteine 67, cysteine 70, cysteine 74, cysteine 104, cysteine 107, cysteine 110, and cysteine 114.

It belongs to the complex I 23 kDa subunit family. In terms of assembly, NDH is composed of at least 16 different subunits, 5 of which are encoded in the nucleus. [4Fe-4S] cluster serves as cofactor.

The protein resides in the plastid. The protein localises to the chloroplast thylakoid membrane. It catalyses the reaction a plastoquinone + NADH + (n+1) H(+)(in) = a plastoquinol + NAD(+) + n H(+)(out). The enzyme catalyses a plastoquinone + NADPH + (n+1) H(+)(in) = a plastoquinol + NADP(+) + n H(+)(out). NDH shuttles electrons from NAD(P)H:plastoquinone, via FMN and iron-sulfur (Fe-S) centers, to quinones in the photosynthetic chain and possibly in a chloroplast respiratory chain. The immediate electron acceptor for the enzyme in this species is believed to be plastoquinone. Couples the redox reaction to proton translocation, and thus conserves the redox energy in a proton gradient. The polypeptide is NAD(P)H-quinone oxidoreductase subunit I, chloroplastic (Crucihimalaya wallichii (Rock-cress)).